A 446-amino-acid chain; its full sequence is Methionine aminopeptidase 2-3 (446 aa).

Residues 14-116 (ITDAGANGAD…ENRYRTTSEE (103 aa)) are disordered. Basic residues predominate over residues 61-76 (AKKKKNKKRKPKKKQP). Residues 86-96 (PLSQLFPNNSY) are compositionally biased toward polar residues. The span at 98-116 (KGEEVEYKDENRYRTTSEE) shows a compositional bias: basic and acidic residues. Position 199 (histidine 199) interacts with substrate. The a divalent metal cation site is built by aspartate 219, aspartate 230, and histidine 299. Residue histidine 307 participates in substrate binding. A divalent metal cation contacts are provided by glutamate 332 and glutamate 427.

This sequence belongs to the peptidase M24A family. Methionine aminopeptidase eukaryotic type 2 subfamily. Co(2+) serves as cofactor. Requires Zn(2+) as cofactor. It depends on Mn(2+) as a cofactor. Fe(2+) is required as a cofactor.

It is found in the cytoplasm. The catalysed reaction is Release of N-terminal amino acids, preferentially methionine, from peptides and arylamides.. In terms of biological role, cotranslationally removes the N-terminal methionine from nascent proteins. The N-terminal methionine is often cleaved when the second residue in the primary sequence is small and uncharged (Met-Ala-, Cys, Gly, Pro, Ser, Thr, or Val). The protein is Methionine aminopeptidase 2-3 of Aspergillus fumigatus (strain CBS 144.89 / FGSC A1163 / CEA10) (Neosartorya fumigata).